The primary structure comprises 397 residues: 4-hydroxyphenylpyruvate dioxygenase (397 aa).

VOC domains lie at 18 to 149 (NFHH…FVEY) and 181 to 339 (FIDH…IFTK). Residues His184, His267, and Glu350 each coordinate Fe cation.

It belongs to the 4HPPD family. As to quaternary structure, homodimer. Requires Fe cation as cofactor.

It is found in the cytoplasm. It localises to the endoplasmic reticulum membrane. Its subcellular location is the golgi apparatus membrane. It carries out the reaction 3-(4-hydroxyphenyl)pyruvate + O2 = homogentisate + CO2. It participates in amino-acid degradation; L-phenylalanine degradation; acetoacetate and fumarate from L-phenylalanine: step 3/6. In terms of biological role, catalyzes the conversion of 4-hydroxyphenylpyruvic acid to homogentisic acid, one of the steps in tyrosine catabolism. This Danio rerio (Zebrafish) protein is 4-hydroxyphenylpyruvate dioxygenase (hpd).